We begin with the raw amino-acid sequence, 478 residues long: Sulfate adenylyltransferase subunit 1 (478 aa).

The tr-type G domain occupies 24–240 (KSLLRFLTCG…VLENVDIDAD (217 aa)). The G1 stretch occupies residues 33–40 (GSVDDGKS). 33-40 (GSVDDGKS) is a binding site for GTP. Positions 91–95 (GITID) are G2. Positions 112–115 (DTPG) are G3. GTP contacts are provided by residues 112–116 (DTPGH) and 167–170 (NKMD). The segment at 167–170 (NKMD) is G4. Residues 206–208 (SAL) form a G5 region.

This sequence belongs to the TRAFAC class translation factor GTPase superfamily. Classic translation factor GTPase family. CysN/NodQ subfamily. As to quaternary structure, heterodimer composed of CysD, the smaller subunit, and CysN.

It catalyses the reaction sulfate + ATP + H(+) = adenosine 5'-phosphosulfate + diphosphate. Its pathway is sulfur metabolism; hydrogen sulfide biosynthesis; sulfite from sulfate: step 1/3. Its function is as follows. With CysD forms the ATP sulfurylase (ATPS) that catalyzes the adenylation of sulfate producing adenosine 5'-phosphosulfate (APS) and diphosphate, the first enzymatic step in sulfur assimilation pathway. APS synthesis involves the formation of a high-energy phosphoric-sulfuric acid anhydride bond driven by GTP hydrolysis by CysN coupled to ATP hydrolysis by CysD. The protein is Sulfate adenylyltransferase subunit 1 of Aliivibrio fischeri (strain ATCC 700601 / ES114) (Vibrio fischeri).